A 168-amino-acid chain; its full sequence is Histone doublet miniH2B-H2A (168 aa).

The protein localises to the host nucleus. The protein resides in the host cytoplasm. Its subcellular location is the virion. Its function is as follows. Histone-like protein that is recruited to viral factories during viral replication and participates in viral DNA packaging and virion production probably by forming unstable nucleosome-like particles. May compact the viral DNA. In Melbournevirus (MelV), this protein is Histone doublet miniH2B-H2A.